Consider the following 404-residue polypeptide: Argininosuccinate synthase (404 aa).

ATP-binding positions include 10–18 and A37; that span reads AYSGGLDTS. Residues Y89 and S94 each contribute to the L-citrulline site. G119 provides a ligand contact to ATP. Residues T121, N125, and D126 each coordinate L-aspartate. N125 lines the L-citrulline pocket. Residues R129, S178, S187, E263, and Y275 each coordinate L-citrulline.

It belongs to the argininosuccinate synthase family. Type 1 subfamily. In terms of assembly, homotetramer.

Its subcellular location is the cytoplasm. The enzyme catalyses L-citrulline + L-aspartate + ATP = 2-(N(omega)-L-arginino)succinate + AMP + diphosphate + H(+). Its pathway is amino-acid biosynthesis; L-arginine biosynthesis; L-arginine from L-ornithine and carbamoyl phosphate: step 2/3. This is Argininosuccinate synthase from Photobacterium profundum (strain SS9).